Consider the following 388-residue polypeptide: Leucine aminopeptidase 1 (388 aa).

Positions 1-19 (MRVLAAIALGATGLRGALA) are cleaved as a signal peptide. Residues 20–88 (AVVPQEVLGT…YPTLNSASYV (69 aa)) constitute a propeptide that is removed on maturation. 2 N-linked (GlcNAc...) asparagine glycosylation sites follow: Asn106 and Asn180. Zn(2+) is bound by residues His188 and Asp207. A glycan (N-linked (GlcNAc...) asparagine) is linked at Asn232. Zn(2+) is bound by residues Glu246 and Asp273. Cys322 and Cys326 form a disulfide bridge. His355 is a binding site for Zn(2+).

This sequence belongs to the peptidase M28 family. M28E subfamily. Monomer. The cofactor is Zn(2+).

The protein resides in the secreted. In terms of biological role, extracellular aminopeptidase that allows assimilation of proteinaceous substrates. The chain is Leucine aminopeptidase 1 (lap1) from Aspergillus clavatus (strain ATCC 1007 / CBS 513.65 / DSM 816 / NCTC 3887 / NRRL 1 / QM 1276 / 107).